The sequence spans 421 residues: UDP-N-acetylglucosamine 1-carboxyvinyltransferase (421 aa).

Phosphoenolpyruvate is bound at residue 22–23 (KN). Arg91 serves as a coordination point for UDP-N-acetyl-alpha-D-glucosamine. Residue Cys115 is the Proton donor of the active site. Cys115 is modified (2-(S-cysteinyl)pyruvic acid O-phosphothioketal). Residues 120 to 124 (RPVDL), 160 to 163 (KVSV), Asp305, and Ile327 contribute to the UDP-N-acetyl-alpha-D-glucosamine site.

This sequence belongs to the EPSP synthase family. MurA subfamily.

It is found in the cytoplasm. The catalysed reaction is phosphoenolpyruvate + UDP-N-acetyl-alpha-D-glucosamine = UDP-N-acetyl-3-O-(1-carboxyvinyl)-alpha-D-glucosamine + phosphate. Its pathway is cell wall biogenesis; peptidoglycan biosynthesis. Cell wall formation. Adds enolpyruvyl to UDP-N-acetylglucosamine. The chain is UDP-N-acetylglucosamine 1-carboxyvinyltransferase from Photorhabdus laumondii subsp. laumondii (strain DSM 15139 / CIP 105565 / TT01) (Photorhabdus luminescens subsp. laumondii).